Reading from the N-terminus, the 518-residue chain is Two-component response regulator-like PRR1 (518 aa).

In terms of domain architecture, Response regulatory spans 29–147 (RILLCDSDPS…ELLNLWTHVW (119 aa)). Disordered regions lie at residues 172–241 (PSDA…PGVM), 266–305 (TPTT…GTDV), and 483–518 (VRQA…SSPE). Polar residues predominate over residues 196-212 (NQETSTSNQHEYESNPS). The CCT domain maps to 443–485 (RAAALAKFRLKRKERCFDKKVRYVNRKKLAETRPRVRGQFVRQ).

It belongs to the ARR-like family. In terms of assembly, interacts with PIL13. Interacts with PIL15.

It is found in the nucleus. Functionally, controls photoperiodic flowering response. Seems to be one of the component of the circadian clock. Expression of several members of the ARR-like family is controlled by circadian rhythm. The particular coordinated sequential expression of PRR73, PRR37, PRR95, PRR59 and PPR1 result to circadian waves that may be at the basis of the endogenous circadian clock. This is Two-component response regulator-like PRR1 (PRR1) from Oryza sativa subsp. japonica (Rice).